The primary structure comprises 900 residues: Phosphoenolpyruvate carboxylase (900 aa).

Active-site residues include His-140 and Lys-568.

This sequence belongs to the PEPCase type 1 family. Mg(2+) is required as a cofactor.

The enzyme catalyses oxaloacetate + phosphate = phosphoenolpyruvate + hydrogencarbonate. In terms of biological role, forms oxaloacetate, a four-carbon dicarboxylic acid source for the tricarboxylic acid cycle. This chain is Phosphoenolpyruvate carboxylase, found in Neisseria meningitidis serogroup A / serotype 4A (strain DSM 15465 / Z2491).